The chain runs to 324 residues: Cuticle collagen lon-3 (324 aa).

The N-terminal stretch at 1-30 (MSVTTATSGALIFSGASLLVSLFAAASIYS) is a signal peptide. Residues 119–324 (VENTCPTGPD…AWRRKHKRVY (206 aa)) are disordered. 3 triple-helical region regions span residues 129–152 (GEEGEQGPDGQDGVDGVPGFDGQD), 170–229 (GLPG…KGDD), and 235–294 (GRQG…SGLP). 5 stretches are compositionally biased toward low complexity: residues 136-151 (PDGQDGVDGVPGFDGQ), 168-181 (PQGLPGPQGSQGAP), 210-223 (PTGAPGDDGAPGAS), 235-246 (GRQGQRGQPGEQ), and 261-273 (EGPPGVEGEVGVP). Basic and acidic residues predominate over residues 296–311 (KDAEYCKCPTRDDGGN). Positions 314 to 324 (RAWRRKHKRVY) are enriched in basic residues.

The protein belongs to the cuticular collagen family. In terms of assembly, collagen polypeptide chains are complexed within the cuticle by disulfide bonds and other types of covalent cross-links.

Functionally, nematode cuticles are composed largely of collagen-like proteins. The cuticle functions both as an exoskeleton and as a barrier to protect the worm from its environment. Dose-dependent regulator of body length and shape. This is Cuticle collagen lon-3 (lon-3) from Caenorhabditis elegans.